Reading from the N-terminus, the 2464-residue chain is Highly reducing polyketide synthase xilA (2464 aa).

The Ketosynthase family 3 (KS3) domain occupies 9–437 (HDPIALVGIG…GTNGHCIIDH (429 aa)). Residues cysteine 182, histidine 318, and histidine 360 each act as for beta-ketoacyl synthase activity in the active site. Over residues 461-487 (QNGINGTNGTNGTNGTNGTNGTNGTNG) the composition is skewed to low complexity. The interval 461 to 495 (QNGINGTNGTNGTNGTNGTNGTNGTNGHHNPKTEA) is disordered. In terms of domain architecture, Malonyl-CoA:ACP transacylase (MAT) spans 589–911 (FIFTGQGAQW…LKRNEDAQRL (323 aa)). Residues 983–1121 (HDLLGSKVPG…GQIKIEVSTF (139 aa)) are N-terminal hotdog fold. The region spanning 983–1286 (HDLLGSKVPG…FTSLNNEQES (304 aa)) is the PKS/mFAS DH domain. The Proton acceptor; for dehydratase activity role is filled by histidine 1015. Positions 1133 to 1286 (GRLVDAQTWY…FTSLNNEQES (154 aa)) are C-terminal hotdog fold. Aspartate 1199 acts as the Proton donor; for dehydratase activity in catalysis. Residues 1282–1490 (NEQESTSTGD…TEPAHHSTIT (209 aa)) form a methyltransferase (CMeT) domain region. An Enoyl reductase (ER) domain is found at 1716–2028 (GILTSLYFKP…KGTHIGKMVI (313 aa)). The 180-residue stretch at 2052–2231 (ANYILVGGMS…ATTVSLGFIN (180 aa)) folds into the Ketoreductase (KR) domain. In terms of domain architecture, Carrier spans 2383-2461 (ETVTFVTDAI…SIAQVIVEEA (79 aa)). Serine 2420 carries the O-(pantetheine 4'-phosphoryl)serine modification.

Pantetheine 4'-phosphate is required as a cofactor.

It functions in the pathway secondary metabolite biosynthesis. Its function is as follows. Highly reducing polyketide synthase; part of the gene cluster that mediates the biosynthesis of the 6-methyl-2-pyrone derivative xylariolide D. XilA produces the 5-alkyl-6-methyl-2-pyrone backbone called prexylariolide D via sequential condensations of 4 malonyl-CoA units with one acetyl-CoA starter unit. During the biosynthesis, the linear polyketide chain is branched by the addition of an acetyl unit as the origin of the methyl group at the 2-pyrone ring. Prexylariolide D is then hydroxylated at the side chain by xilC to form the final product, xylariolide D. This is Highly reducing polyketide synthase xilA from Penicillium rubens (strain ATCC 28089 / DSM 1075 / NRRL 1951 / Wisconsin 54-1255) (Penicillium chrysogenum).